The chain runs to 73 residues: Guanine nucleotide-binding protein G(I)/G(S)/G(O) subunit gamma-11 (73 aa).

The segment at 51-73 is disordered; that stretch reads DPLVKGIPEDKNPFKEKGSCVIS. C70 is modified (cysteine methyl ester). C70 carries S-farnesyl cysteine lipidation. The propeptide at 71–73 is removed in mature form; that stretch reads VIS.

The protein belongs to the G protein gamma family. As to quaternary structure, g proteins are composed of 3 units, alpha, beta and gamma. Interacts with beta-1 and beta-3, but not with beta-2. As to expression, abundantly expressed in all tissues tested except for brain.

The protein localises to the cell membrane. Guanine nucleotide-binding proteins (G proteins) are involved as a modulator or transducer in various transmembrane signaling systems. The beta and gamma chains are required for the GTPase activity, for replacement of GDP by GTP, and for G protein-effector interaction. This is Guanine nucleotide-binding protein G(I)/G(S)/G(O) subunit gamma-11 (GNG11) from Homo sapiens (Human).